Reading from the N-terminus, the 93-residue chain is Auxin-responsive protein SAUR26 (93 aa).

Belongs to the ARG7 family. As to quaternary structure, interacts with PP2C-D1. As to expression, higher expression in thermo-responsive cultivars (e.g. cv. Alst-1, cv. Ang-0 and cv. Com-0) than in low thermo-responsive cultivars (e.g. cv. Dja-1, cv. El-0 and cv. Kon).

Its subcellular location is the cell membrane. In terms of biological role, provide a mechanistic link between auxin and plasma membrane H(+)-ATPases (PM H(+)-ATPases, e.g. AHA1 and AHA2), and triggers PM H(+)-ATPases activity by promoting phosphorylation of their C-terminal autoinhibitory domain as a result of PP2C-D subfamily of type 2C phosphatases inhibition, thus leading to the acidification of the apoplast and the facilitation of solutes and water uptake to drive cell expansion. Functions as a positive effectors of cell expansion through modulation of auxin transport. Involved in thermo-responsiveness of plant architecture. Enhances plasma membrane H(+)-ATPase. Probably involved in light intensity mediated root development. The polypeptide is Auxin-responsive protein SAUR26 (Arabidopsis thaliana (Mouse-ear cress)).